The chain runs to 538 residues: Bifunctional purine biosynthesis protein PurH (538 aa).

One can recognise an MGS-like domain in the interval 8–158 (FPIPDLHRVR…KNHVYTGVIT (151 aa)).

The protein belongs to the PurH family.

The enzyme catalyses (6R)-10-formyltetrahydrofolate + 5-amino-1-(5-phospho-beta-D-ribosyl)imidazole-4-carboxamide = 5-formamido-1-(5-phospho-D-ribosyl)imidazole-4-carboxamide + (6S)-5,6,7,8-tetrahydrofolate. It catalyses the reaction IMP + H2O = 5-formamido-1-(5-phospho-D-ribosyl)imidazole-4-carboxamide. It participates in purine metabolism; IMP biosynthesis via de novo pathway; 5-formamido-1-(5-phospho-D-ribosyl)imidazole-4-carboxamide from 5-amino-1-(5-phospho-D-ribosyl)imidazole-4-carboxamide (10-formyl THF route): step 1/1. It functions in the pathway purine metabolism; IMP biosynthesis via de novo pathway; IMP from 5-formamido-1-(5-phospho-D-ribosyl)imidazole-4-carboxamide: step 1/1. In Bartonella henselae (strain ATCC 49882 / DSM 28221 / CCUG 30454 / Houston 1) (Rochalimaea henselae), this protein is Bifunctional purine biosynthesis protein PurH.